The sequence spans 278 residues: ATP synthase subunit delta (278 aa).

This sequence belongs to the ATPase delta chain family. In terms of assembly, F-type ATPases have 2 components, F(1) - the catalytic core - and F(0) - the membrane proton channel. F(1) has five subunits: alpha(3), beta(3), gamma(1), delta(1), epsilon(1). F(0) has three main subunits: a(1), b(2) and c(10-14). The alpha and beta chains form an alternating ring which encloses part of the gamma chain. F(1) is attached to F(0) by a central stalk formed by the gamma and epsilon chains, while a peripheral stalk is formed by the delta and b chains.

It is found in the cell membrane. Its function is as follows. F(1)F(0) ATP synthase produces ATP from ADP in the presence of a proton or sodium gradient. F-type ATPases consist of two structural domains, F(1) containing the extramembraneous catalytic core and F(0) containing the membrane proton channel, linked together by a central stalk and a peripheral stalk. During catalysis, ATP synthesis in the catalytic domain of F(1) is coupled via a rotary mechanism of the central stalk subunits to proton translocation. Functionally, this protein is part of the stalk that links CF(0) to CF(1). It either transmits conformational changes from CF(0) to CF(1) or is implicated in proton conduction. The sequence is that of ATP synthase subunit delta from Bifidobacterium longum (strain DJO10A).